The sequence spans 198 residues: Ribonuclease HII (198 aa).

Positions 2–191 (VLECGVDETG…IRELLVGKDN (190 aa)) constitute an RNase H type-2 domain. Asp-8, Glu-9, and Asp-100 together coordinate a divalent metal cation.

This sequence belongs to the RNase HII family. It depends on Mn(2+) as a cofactor. Mg(2+) is required as a cofactor.

The protein localises to the cytoplasm. The enzyme catalyses Endonucleolytic cleavage to 5'-phosphomonoester.. In terms of biological role, endonuclease that specifically degrades the RNA of RNA-DNA hybrids. The sequence is that of Ribonuclease HII from Desulforamulus reducens (strain ATCC BAA-1160 / DSM 100696 / MI-1) (Desulfotomaculum reducens).